Here is a 180-residue protein sequence, read N- to C-terminus: Large ribosomal subunit protein uL6 (180 aa).

Belongs to the universal ribosomal protein uL6 family. Part of the 50S ribosomal subunit.

This protein binds to the 23S rRNA, and is important in its secondary structure. It is located near the subunit interface in the base of the L7/L12 stalk, and near the tRNA binding site of the peptidyltransferase center. This Clostridium botulinum (strain Langeland / NCTC 10281 / Type F) protein is Large ribosomal subunit protein uL6.